Consider the following 393-residue polypeptide: NAD(P)H-quinone oxidoreductase subunit H 1 (393 aa).

This sequence belongs to the complex I 49 kDa subunit family. NDH-1 can be composed of about 15 different subunits; different subcomplexes with different compositions have been identified which probably have different functions.

Its subcellular location is the cell inner membrane. The catalysed reaction is a plastoquinone + NADH + (n+1) H(+)(in) = a plastoquinol + NAD(+) + n H(+)(out). It catalyses the reaction a plastoquinone + NADPH + (n+1) H(+)(in) = a plastoquinol + NADP(+) + n H(+)(out). In terms of biological role, NDH-1 shuttles electrons from an unknown electron donor, via FMN and iron-sulfur (Fe-S) centers, to quinones in the respiratory and/or the photosynthetic chain. The immediate electron acceptor for the enzyme in this species is believed to be plastoquinone. Couples the redox reaction to proton translocation, and thus conserves the redox energy in a proton gradient. Cyanobacterial NDH-1 also plays a role in inorganic carbon-concentration. The sequence is that of NAD(P)H-quinone oxidoreductase subunit H 1 from Gloeobacter violaceus (strain ATCC 29082 / PCC 7421).